We begin with the raw amino-acid sequence, 127 residues long: Protein chibby homolog 1 (127 aa).

Residues 1 to 25 are disordered; the sequence is MPLFGSIFSPKKTPPRKSASLSNLH. Phosphoserine occurs at positions 9 and 20. A minimal region for the interaction with PKD2 region spans residues 60–112; the sequence is VADSVISGGVDRRETQRLRKRNQQLEEENNLLRLKVDILLDMLSETTAESHLK. Positions 68 to 110 form a coiled coil; sequence GVDRRETQRLRKRNQQLEEENNLLRLKVDILLDMLSETTAESH. Residues 77–98 are leucine-zipper; mediates homodimerization; that stretch reads LRKRNQQLEEENNLLRLKVDIL.

It belongs to the chibby family. In terms of assembly, homodimer. Homodimerization is essential for nuclear localization and interaction with KPNA4 but is dispensable for interaction with CTNNB1. Interacts with polycystin-2/PKD2 and GM130. Interacts with the C-terminal region of CTNNB1. Interacts (C-terminus) with TCIM (C-terminus), TCIM competes with CTNNB1 for the interaction with CBY1. Interacts with FAM92A; this interaction facilitates targeting of FAM92A to cilium basal body. Interacts with CIBAR2. Interacts with KPNA4.

It localises to the nucleus speckle. Its subcellular location is the cytoplasm. It is found in the cytoskeleton. The protein resides in the cilium basal body. The protein localises to the microtubule organizing center. It localises to the centrosome. Its subcellular location is the centriole. It is found in the golgi apparatus. The protein resides in the trans-Golgi network. The protein localises to the cell projection. It localises to the cilium. Its subcellular location is the flagellum. It is found in the nucleus. Inhibits the Wnt/Wingless pathway by binding to CTNNB1/beta-catenin and inhibiting beta-catenin-mediated transcriptional activation through competition with TCF/LEF transcription factors. Has also been shown to play a role in regulating the intracellular trafficking of polycystin-2/PKD2 and possibly of other intracellular proteins. Promotes adipocyte and cardiomyocyte differentiation. The sequence is that of Protein chibby homolog 1 (Cby1) from Rattus norvegicus (Rat).